Here is a 117-residue protein sequence, read N- to C-terminus: Immunoglobulin heavy variable 1-69-2 (117 aa).

An N-terminal signal peptide occupies residues 1–19; it reads MDCTWRILLLVAAATGTHA. The segment at 20–44 is framework-1; that stretch reads EVQLVQSGAEVKKPGATVKISCKVS. The region spanning 20-117 is the Ig-like domain; sequence EVQLVQSGAE…EDTAVYYCAT (98 aa). Cys41 and Cys115 form a disulfide bridge. Residues 45–52 form a complementarity-determining-1 region; sequence GYTFTDYY. The interval 53–69 is framework-2; sequence MHWVQQAPGKGLEWMGL. A complementarity-determining-2 region spans residues 70–77; it reads VDPEDGET. Positions 78 to 115 are framework-3; it reads IYAEKFQGRVTITADTSTDTAYMELSSLRSEDTAVYYC. The complementarity-determining-3 stretch occupies residues 116–117; sequence AT.

As to quaternary structure, immunoglobulins are composed of two identical heavy chains and two identical light chains; disulfide-linked.

It is found in the secreted. The protein localises to the cell membrane. V region of the variable domain of immunoglobulin heavy chains that participates in the antigen recognition. Immunoglobulins, also known as antibodies, are membrane-bound or secreted glycoproteins produced by B lymphocytes. In the recognition phase of humoral immunity, the membrane-bound immunoglobulins serve as receptors which, upon binding of a specific antigen, trigger the clonal expansion and differentiation of B lymphocytes into immunoglobulins-secreting plasma cells. Secreted immunoglobulins mediate the effector phase of humoral immunity, which results in the elimination of bound antigens. The antigen binding site is formed by the variable domain of one heavy chain, together with that of its associated light chain. Thus, each immunoglobulin has two antigen binding sites with remarkable affinity for a particular antigen. The variable domains are assembled by a process called V-(D)-J rearrangement and can then be subjected to somatic hypermutations which, after exposure to antigen and selection, allow affinity maturation for a particular antigen. In Homo sapiens (Human), this protein is Immunoglobulin heavy variable 1-69-2.